The primary structure comprises 748 residues: Catalase-peroxidase (748 aa).

The tryptophyl-tyrosyl-methioninium (Trp-Tyr) (with M-264) cross-link spans 92 to 238 (WHSAGTYRIG…LAAVQMGLIY (147 aa)). His-93 acts as the Proton acceptor in catalysis. Residues 238–264 (YVNPEGPDGNPDPIASARDIRDTFARM) constitute a cross-link (tryptophyl-tyrosyl-methioninium (Tyr-Met) (with W-92)). Heme b is bound at residue His-279.

The protein belongs to the peroxidase family. Peroxidase/catalase subfamily. Homodimer or homotetramer. Heme b serves as cofactor. Formation of the three residue Trp-Tyr-Met cross-link is important for the catalase, but not the peroxidase activity of the enzyme.

The enzyme catalyses H2O2 + AH2 = A + 2 H2O. The catalysed reaction is 2 H2O2 = O2 + 2 H2O. Functionally, bifunctional enzyme with both catalase and broad-spectrum peroxidase activity. In Xanthomonas euvesicatoria pv. vesicatoria (strain 85-10) (Xanthomonas campestris pv. vesicatoria), this protein is Catalase-peroxidase.